Reading from the N-terminus, the 25-residue chain is Ocellatin-F1 (25 aa).

The residue at position 25 (leucine 25) is a Leucine amide.

It belongs to the frog skin active peptide (FSAP) family. Ocellatin subfamily. Expressed by the skin glands.

The protein resides in the secreted. Functionally, antibacterial peptide that inhibits reference strains of both Gram-negative bacteria (E.coli, P.aeruginosa, E.cloacae, K.pneumoniae, and A.actinomycetemcomitans) and Gram-positive bacteria (S.aureus) with relatively low potencies (MIC=25-400 uM). Shows antifungal activity against C.lusitaniae (MIC=50.25 uM), but no activity against C.albicans. In the presence of an alkaloid (bufotenine), inhibits cellular infection by the rabies virus. The peptide shows very low hemolytic activity against rabbit erythrocytes. The low amphipathicity of alpha-helices demonstrated by wheel projection as well as the low cationicity may explain the low antibacterial and hemolytic potencies. This Leptodactylus labyrinthicus (Labyrinth frog) protein is Ocellatin-F1.